A 214-amino-acid polypeptide reads, in one-letter code: MGVMGGTFDPIHYGHLVAASEVADLFDLDEVVFVPSGQPWQKGRQVSAAEHRYLMTVIATASNPRFSVSRVDIDRGGPTYTKDTLADLHALHPDSELYFTTGADALASIMSWQGWEELFELARFVGVSRPGYELRNEHITSLLGQLAKDALTLVEIPALAISSTDCRQRAEQSRPLWYLMPDSVVQYVSKCRLYCGACDAGARSTTSLAAGNGL.

The protein belongs to the NadD family.

It carries out the reaction nicotinate beta-D-ribonucleotide + ATP + H(+) = deamido-NAD(+) + diphosphate. It participates in cofactor biosynthesis; NAD(+) biosynthesis; deamido-NAD(+) from nicotinate D-ribonucleotide: step 1/1. Functionally, catalyzes the reversible adenylation of nicotinate mononucleotide (NaMN) to nicotinic acid adenine dinucleotide (NaAD). The polypeptide is Probable nicotinate-nucleotide adenylyltransferase (Mycobacterium bovis (strain ATCC BAA-935 / AF2122/97)).